A 956-amino-acid polypeptide reads, in one-letter code: Outer capsid protein VP2 (956 aa).

The protein belongs to the orbivirus VP2 family.

It is found in the virion. Its function is as follows. The VP2 protein is one of the two proteins (with VP5) which constitute the virus particle outer capsid. It is the major target of the host immunogenic response. Responsible for viral attachment to target host cell, probably by binding to sialic acid. This attachment induces virion internalization predominantly through clathrin-dependent endocytosis. This Bluetongue virus 10 (isolate USA) (BTV 10) protein is Outer capsid protein VP2 (Segment-2).